The primary structure comprises 114 residues: QDAAKGEAVFKQCMTCHRADKNMVGPALGGVVGRKAGTAAGFTYSPLNHNSGEAGLVWTQENIIAYLPDPNAYLKKFLTDKGQADKATGSTKMTFKLANDQQRKDVAAYLATLK.

Position 1 is a pyrrolidone carboxylic acid (glutamine 1). Positions 13, 16, 17, and 93 each coordinate heme c.

Belongs to the cytochrome c family. Binds 1 heme c group covalently per subunit.

Its function is as follows. Cytochrome c2 is found mainly in purple, non-sulfur, photosynthetic bacteria where it functions as the electron donor to the oxidized bacteriochlorophyll in the photophosphorylation pathway. However, it may also have a role in the respiratory chain and is found in some non-photosynthetic bacteria. The sequence is that of Cytochrome c2 (cycA) from Rhodopseudomonas palustris.